The chain runs to 129 residues: Large ribosomal subunit protein bL17 (129 aa).

Belongs to the bacterial ribosomal protein bL17 family. Part of the 50S ribosomal subunit. Contacts protein L32.

The chain is Large ribosomal subunit protein bL17 from Serratia proteamaculans (strain 568).